The primary structure comprises 187 residues: Thermosensitive gluconokinase (187 aa).

10 to 17 contributes to the ATP binding site; sequence GVSGSGKT.

It belongs to the gluconokinase GntK/GntV family.

It carries out the reaction D-gluconate + ATP = 6-phospho-D-gluconate + ADP + H(+). Its pathway is carbohydrate acid metabolism; L-idonate degradation. In Escherichia coli (strain K12), this protein is Thermosensitive gluconokinase (idnK).